Here is a 215-residue protein sequence, read N- to C-terminus: Orotate phosphoribosyltransferase (215 aa).

K26 is a binding site for 5-phospho-alpha-D-ribose 1-diphosphate. 34-35 (FF) serves as a coordination point for orotate. 5-phospho-alpha-D-ribose 1-diphosphate contacts are provided by residues 72-73 (YK), R99, K100, K103, H105, and 124-132 (DDVITAGTA). The orotate site is built by T128 and R156.

It belongs to the purine/pyrimidine phosphoribosyltransferase family. PyrE subfamily. In terms of assembly, homodimer. The cofactor is Mg(2+).

It catalyses the reaction orotidine 5'-phosphate + diphosphate = orotate + 5-phospho-alpha-D-ribose 1-diphosphate. It participates in pyrimidine metabolism; UMP biosynthesis via de novo pathway; UMP from orotate: step 1/2. Functionally, catalyzes the transfer of a ribosyl phosphate group from 5-phosphoribose 1-diphosphate to orotate, leading to the formation of orotidine monophosphate (OMP). This is Orotate phosphoribosyltransferase from Cellvibrio japonicus (strain Ueda107) (Pseudomonas fluorescens subsp. cellulosa).